The primary structure comprises 537 residues: Cytochrome P450 monooxygenase AOL_s00215g282 (537 aa).

A helical transmembrane segment spans residues 9-29 (ATVVLCGSIVTVSIAYVIFVV). Asn-126 carries N-linked (GlcNAc...) asparagine glycosylation. Cys-451 is a heme binding site.

The protein belongs to the cytochrome P450 family. Requires heme as cofactor.

The protein localises to the membrane. Its pathway is secondary metabolite biosynthesis; terpenoid biosynthesis. Functionally, cytochrome P450 monooxygenase; part of the gene cluster that mediates the biosynthesis of sesquiterpenyl epoxy-cyclohexenoids (SECs) such as anthrobotrisins and arthrosporols, metabolites that possess a novel hybrid carbon skeleton consisting of a polyketide-derived epoxycyclohexenol combined with a terpenoid-derived monocyclic sesquiterpenol substructure (PKS-PTS hybrid). The SEC pathway plays an important role for fungal soil colonization via decreasing fungal nematode-capturing ability. Within the pathway, the cytochrome P450 monooxygenase AOL_s00215g282 acts as a m-cresol hydrolase that converts m-cresol to toluquinol. The pathway begins with the biosynthesis of 6-methylsalicylic acid (6-MSA), the first precursor of the polyketide-derived epoxycyclohexenol in arthrosporols, by the polyketide synthase (PKS) AOL_s00215g283 via condensation of 1 acetate and 3 malonate units. The 6-methylsalicylic acid decarboxylase AOL_s00215g281 then catalyzes the decarboxylation of 6-methylsalicylic acid to yield m-cresol. The cytochrome P450 monooxygenase AOL_s00215g282 further oxidizes m-cresol to yield toluquinol. With the assistance of the oxidoreductase AOL_s00215g277, the polyprenyl transferase AOL_s00215g276 catalyzes the farnesylation of toluquinol to produce farnesyl hydroquinone, the hybrid precursor for biosynthesis of SECs. Farnesyl hydroquinone undergoes epoxidation and then subsequent dehydrogenation to form farnesyl epoxy-quinone, the first and simplest SEC. The cytochrome P450 monooxygenase AOL_s00215g278 and the FAD-dependent monooxygenase AOL_s00215g279 might be involved in the oxygenation of the phenol moiety, most likely in the epoxy formation. The cytochrome P450 monooxygenases AOL_s00215g274 and AOL_s00215g280 are involved in specific regional ketone reductions at respectively C-4 and C-1 of farnesyl epoxy-quinone PubMed:33823587. The protein is Cytochrome P450 monooxygenase AOL_s00215g282 of Arthrobotrys oligospora (strain ATCC 24927 / CBS 115.81 / DSM 1491) (Nematode-trapping fungus).